We begin with the raw amino-acid sequence, 1346 residues long: Adhesion G protein-coupled receptor F5 (1346 aa).

An N-terminal signal peptide occupies residues 1–21 (MKSPRRTTLCLMFIVIYSSKA). At 22 to 1006 (ALNWNYESTI…MSPDSPDPSS (985 aa)) the chain is on the extracellular side. Asparagine 73, asparagine 94, asparagine 106, asparagine 188, asparagine 256, asparagine 272, asparagine 301, asparagine 315, asparagine 328, asparagine 398, asparagine 472, asparagine 487, asparagine 505, asparagine 540, asparagine 627, asparagine 649, asparagine 666, asparagine 820, asparagine 931, asparagine 963, and asparagine 982 each carry an N-linked (GlcNAc...) asparagine glycan. Positions 166–273 (LQEDVTLNMR…NSFQAVTINE (108 aa)) constitute an SEA domain. Ig-like domains follow at residues 267-368 (QAVT…IDVM), 369-466 (PIQI…IKVT), and 471-561 (ANLT…KDVI). 2 disulfide bridges follow: cysteine 293-cysteine 350 and cysteine 391-cysteine 449. Cysteine 492 and cysteine 545 are disulfide-bonded. One can recognise a GAIN-B domain in the interval 842-1003 (PPLSFSQTNV…SILMSPDSPD (162 aa)). Cystine bridges form between cysteine 954–cysteine 985 and cysteine 973–cysteine 987. The tract at residues 954–1003 (CVFWNFRLANNTGGWDSSGCYVEEGDGDNVTCICDHLTSFSILMSPDSPD) is GPS. The interval 991–1006 (TSFSILMSPDSPDPSS) is tethered agonist. Residues 1007–1027 (LLGILLDIISYVGVGFSILSL) form a helical membrane-spanning segment. At 1028–1053 (AACLVVEAVVWKSVTKNRTSYMRHTC) the chain is on the cytoplasmic side. Residues 1054 to 1074 (IVNIAASLLVANTWFIVVAAI) traverse the membrane as a helical segment. Residues 1075–1090 (QDNRYILCKTACVAAT) lie on the Extracellular side of the membrane. Residues 1091–1111 (FFIHFFYLSVFFWMLTLGLML) traverse the membrane as a helical segment. The Cytoplasmic portion of the chain corresponds to 1112 to 1128 (FYRLVFILHETSRSTQK). A helical membrane pass occupies residues 1129-1149 (AIAFCLGYGCPLAISVITLGA). At 1150-1173 (TQPREVYTRKNVCWLNWEDTKALL) the chain is on the extracellular side. The helical transmembrane segment at 1174 to 1194 (AFAIPALIIVVVNITITIVVI) threads the bilayer. Residues 1195–1220 (TKILRPSIGDKPCKQEKSSLFQISKS) are Cytoplasmic-facing. Residues 1221 to 1241 (IGVLTPLLGLTWGFGLTTVFP) traverse the membrane as a helical segment. Topologically, residues 1242–1244 (GTN) are extracellular. The helical transmembrane segment at 1245 to 1265 (LVFHIIFAILNVFQGLFILLF) threads the bilayer. Residues 1266–1346 (GCLWDLKVQE…NSSSASSLLN (81 aa)) are Cytoplasmic-facing. Threonine 1300 is subject to Phosphothreonine. Position 1307 is a phosphoserine (serine 1307). The tract at residues 1327-1346 (TPEATSSSLENSSSASSLLN) is disordered. The span at 1329 to 1346 (EATSSSLENSSSASSLLN) shows a compositional bias: low complexity.

The protein belongs to the G-protein coupled receptor 2 family. Adhesion G-protein coupled receptor (ADGR) subfamily. In terms of assembly, homodimer; disulfide-linked. Heterodimer of 2 chains generated by proteolytic processing; the large extracellular N-terminal fragment and the membrane-bound C-terminal fragment predominantly remain associated and non-covalently linked. Fragment generates by the processing enzyme furin remains attached to the extracellular N-terminal fragment. Interacts (via N-terminal extracellular domain) with SFTPD. In terms of processing, highly glycosylated. Post-translationally, proteolytically cleaved at multiple sites: one in the GPS region of the GAIN-B domain (S1 site) and the other in the SEA domain (S2 site). The proteolytic cleavage at S1 site generates an extracellular subunit and a seven-transmembrane subunit. The proteolytic cleavage at S2 site generates a fragment that undergoes proteolytic cleavage by the processing enzyme furin. As to expression, expressed in lung endothelial cells and in alveolar type II (ATII) cells (at protein level). Expressed high levels in subcutaneous adipose tissue in lean individuals and at lower levels in visceral fat. Expression levels in subcutaneous adipose tissue drastically drop in obese individuals.

It is found in the cell membrane. With respect to regulation, as an adhesion G protein-coupled receptor (aGPCR) exhibits a large N-terminal extracellular domain containing highly conserved GPCR autoproteolysis-inducing (GAIN) domain. During synthesis, intracellular autoproteolytic processing of nascent chain within the GAIN domain generates a mature protein, consisting of an N-terminal fragment that is non-covalently linked to the C-terminal fragment. The mature protein is routed to the plasma membrane where the N- and C-terminal fragments remain associated, forming the holoreceptor. Dissociation of the aGPCR fragments stimulates G protein signaling through the action of the tethered-peptide agonist stalk that is occluded within the GAIN domain in the holoreceptor form. This dissociation might be induced by ligand binding, such as that of sFNDC4. Its function is as follows. Adhesion G protein-coupled receptor. In alveolar type II (ATII or AT2) cells, required for normal lung surfactant homeostasis. Modulation of both surfactant secretion and uptake by ATII cells is mediated by the downstream activation of GNAQ/GNA11 proteins and may be a consequence of increased cortical F-actin assembly induced by ADGRF5 activation. In the kidney, may play a role in the regulation of acid excretion into the primary urine, possibly by regulating the surface expression of V-ATPase proton pump. As a receptor for soluble FNDC4 (sFNDC4), required for proper systemic glucose tolerance, specifically sensitizing white adipose tissue to insulin. Also plays a role in sFNDC4-induced decrease of local inflammation in white adipose tissue. This chain is Adhesion G protein-coupled receptor F5, found in Homo sapiens (Human).